We begin with the raw amino-acid sequence, 635 residues long: Sodium- and chloride-dependent transporter XTRP3B (635 aa).

The disordered stretch occupies residues 1-38; it reads MESPSAHAVSLPEDEELQPWGGAGGPGQHPGRPRSTEC. Over 1–56 the chain is Cytoplasmic; the sequence is MESPSAHAVSLPEDEELQPWGGAGGPGQHPGRPRSTECAHPGVVEKVRPKWDNPLQ. The helical transmembrane segment at 57–77 threads the bilayer; sequence FLLVCISYAVGLGNVWRFPYL. Residues 78 to 85 lie on the Extracellular side of the membrane; it reads CQMYGGGN. A helical membrane pass occupies residues 86-106; sequence FLVPYIIMLIVEGMPLLYLEL. Topologically, residues 107-127 are cytoplasmic; that stretch reads AVGQRMRQGSIGAWRTISPYL. Residues 128–148 form a helical membrane-spanning segment; the sequence is SGVGIASLVVSFLASVYFNVI. At 149-208 the chain is on the extracellular side; it reads NTWALWYLFHSFQDPLPWSVCPLNSNHTGYDEECEKASSTQYFWYRKTLNISPSIQENGG. Residue N174 is glycosylated (N-linked (GlcNAc...) asparagine). The helical transmembrane segment at 209 to 229 threads the bilayer; the sequence is VQWEPALCLTLAWLMVYLCIL. Over 230–237 the chain is Cytoplasmic; it reads RGTESTGK. A helical membrane pass occupies residues 238-258; it reads VVYFTTSLPYFVLIIYLVRGL. The Extracellular portion of the chain corresponds to 259-284; the sequence is TLHGATNGLAYMFTPKIEQLANPKAW. The chain crosses the membrane as a helical span at residues 285 to 305; the sequence is INAATQIFFSLGLGCGGLIAF. Residues 306-319 are Cytoplasmic-facing; the sequence is ASYNEPSNDCQKHA. A helical transmembrane segment spans residues 320 to 340; it reads LIVSVINSTTAIFSSIVTFSI. Residues 341–432 lie on the Extracellular side of the membrane; sequence YGFKATFNYE…EAIKNMEVSQ (92 aa). An N-linked (GlcNAc...) asparagine glycan is attached at N400. The helical transmembrane segment at 433 to 453 threads the bilayer; it reads LWSVLYFFMLLTLGMGSMVGT. At 454 to 474 the chain is on the cytoplasmic side; that stretch reads GTAILTPLTDSKIISSYLPKE. The chain crosses the membrane as a helical span at residues 475–495; the sequence is AISGLVCLLNCAIGMVFTMEA. Topologically, residues 496–508 are extracellular; the sequence is GNYWFDLFNDYTA. The helical transmembrane segment at 509–529 threads the bilayer; that stretch reads TLSLLLIVLVETIAVCYVYGL. Topologically, residues 530–547 are cytoplasmic; that stretch reads KRFESDLRAMTGRTLSWY. A helical membrane pass occupies residues 548–568; it reads WKVMWAFVSPLLIVGLFIFYL. The Extracellular segment spans residues 569 to 597; that stretch reads SDYILTGTLQYQAWDATQGHVVTKDYPTY. The chain crosses the membrane as a helical span at residues 598–618; the sequence is ALAVIGLLVASSTMCIPLVAL. Residues 619–635 lie on the Cytoplasmic side of the membrane; sequence GTFVTRHFKIREQFSAA.

It belongs to the sodium:neurotransmitter symporter (SNF) (TC 2.A.22) family. SLC6A20 subfamily. Interacts with CLTRN. Detected only in kidney and lung.

It localises to the apical cell membrane. Does not show transporter activity with a range of tested amino acids including proline, glutamine, glutamic acid, leucine, alanine, histidine, glycine and arginine. The sequence is that of Sodium- and chloride-dependent transporter XTRP3B (Slc6a20b) from Mus musculus (Mouse).